Here is a 190-residue protein sequence, read N- to C-terminus: Small ribosomal subunit protein mS23 (190 aa).

Ala-2 bears the N-acetylalanine mark. Lys-102 is modified (N6-acetyllysine). The segment at 139 to 190 is disordered; the sequence is RTQHGGSHVSRKSEHLSVRPQTALEENETQKEVPQDQHLEAPADQSKGLLPP. Basic and acidic residues predominate over residues 166–179; it reads ETQKEVPQDQHLEA.

The protein belongs to the mitochondrion-specific ribosomal protein mS23 family. In terms of assembly, component of the mitochondrial small ribosomal subunit (mt-SSU). Mature mammalian 55S mitochondrial ribosomes consist of a small (28S) and a large (39S) subunit. The 28S small subunit contains a 12S ribosomal RNA (12S mt-rRNA) and 30 different proteins. The 39S large subunit contains a 16S rRNA (16S mt-rRNA), a copy of mitochondrial valine transfer RNA (mt-tRNA(Val)), which plays an integral structural role, and 52 different proteins.

The protein resides in the mitochondrion. The polypeptide is Small ribosomal subunit protein mS23 (MRPS23) (Homo sapiens (Human)).